A 670-amino-acid chain; its full sequence is Methionine--tRNA ligase (670 aa).

The 'HIGH' region motif lies at 14–24; it reads PYANGHLHLGH. Residues Cys145, Cys148, Cys158, and Cys161 each contribute to the Zn(2+) site. The short motif at 330–334 is the 'KMSKS' region element; that stretch reads KMSKS. Lys333 is an ATP binding site. In terms of domain architecture, tRNA-binding spans 570–670; sequence DFAKVDLRIA…AGALPGMKVK (101 aa).

Belongs to the class-I aminoacyl-tRNA synthetase family. MetG type 1 subfamily. Homodimer. Zn(2+) serves as cofactor.

Its subcellular location is the cytoplasm. The enzyme catalyses tRNA(Met) + L-methionine + ATP = L-methionyl-tRNA(Met) + AMP + diphosphate. Its function is as follows. Is required not only for elongation of protein synthesis but also for the initiation of all mRNA translation through initiator tRNA(fMet) aminoacylation. This chain is Methionine--tRNA ligase, found in Legionella pneumophila (strain Paris).